The sequence spans 266 residues: Nickel import ATP-binding protein NikE (266 aa).

Residues 4–252 (ISADNIVKIY…RHPASRLLRE (249 aa)) enclose the ABC transporter domain. 45 to 52 (GRSGCGKS) provides a ligand contact to ATP.

Belongs to the ABC transporter superfamily. Nickel importer (TC 3.A.1.5.3) family. In terms of assembly, the complex is composed of two ATP-binding proteins (NikD and NikE), two transmembrane proteins (NikB and NikC) and a solute-binding protein (NikA).

The protein localises to the cell inner membrane. It catalyses the reaction Ni(2+)(out) + ATP + H2O = Ni(2+)(in) + ADP + phosphate + H(+). Part of the ABC transporter complex NikABCDE involved in nickel import. Responsible for energy coupling to the transport system. This chain is Nickel import ATP-binding protein NikE, found in Brucella abortus (strain 2308).